Consider the following 350-residue polypeptide: Biotin synthase (350 aa).

The Radical SAM core domain occupies 38–256 (NHVQVSTLLS…IAVARIMMPE (219 aa)). Positions 53, 57, and 60 each coordinate [4Fe-4S] cluster. Residues Cys97, Cys128, Cys188, and Arg260 each contribute to the [2Fe-2S] cluster site.

Belongs to the radical SAM superfamily. Biotin synthase family. In terms of assembly, homodimer. It depends on [4Fe-4S] cluster as a cofactor. [2Fe-2S] cluster is required as a cofactor.

It carries out the reaction (4R,5S)-dethiobiotin + (sulfur carrier)-SH + 2 reduced [2Fe-2S]-[ferredoxin] + 2 S-adenosyl-L-methionine = (sulfur carrier)-H + biotin + 2 5'-deoxyadenosine + 2 L-methionine + 2 oxidized [2Fe-2S]-[ferredoxin]. It participates in cofactor biosynthesis; biotin biosynthesis; biotin from 7,8-diaminononanoate: step 2/2. In terms of biological role, catalyzes the conversion of dethiobiotin (DTB) to biotin by the insertion of a sulfur atom into dethiobiotin via a radical-based mechanism. The protein is Biotin synthase of Aliivibrio fischeri (strain MJ11) (Vibrio fischeri).